We begin with the raw amino-acid sequence, 718 residues long: Catalase-peroxidase (718 aa).

Positions 98 to 219 form a cross-link, tryptophyl-tyrosyl-methioninium (Trp-Tyr) (with M-245); that stretch reads WHAAGTYRMG…LAATEMGLIY (122 aa). Residue H99 is the Proton acceptor of the active site. A cross-link (tryptophyl-tyrosyl-methioninium (Tyr-Met) (with W-98)) is located at residues 219–245; it reads YVNPEGPQASGDPRSAAPFIRATFGNM. H260 serves as a coordination point for heme b.

This sequence belongs to the peroxidase family. Peroxidase/catalase subfamily. As to quaternary structure, homodimer or homotetramer. Requires heme b as cofactor. In terms of processing, formation of the three residue Trp-Tyr-Met cross-link is important for the catalase, but not the peroxidase activity of the enzyme.

It catalyses the reaction H2O2 + AH2 = A + 2 H2O. It carries out the reaction 2 H2O2 = O2 + 2 H2O. In terms of biological role, bifunctional enzyme with both catalase and broad-spectrum peroxidase activity. This is Catalase-peroxidase from Acinetobacter baumannii (strain ATCC 17978 / DSM 105126 / CIP 53.77 / LMG 1025 / NCDC KC755 / 5377).